The primary structure comprises 513 residues: MQLNSTEISDLIKQRIEQFEVVSESRNEGTIVAVSDGIIRIHGLADVMQGEMIELPGNRFAIALNLERDSVGAVVMGPYADLAEGVKVKTTGRILEVPVGRGLLGRVVNTLGEPIDGKGPIDNDGFSPVEVIAPGVIERQSVSQPVQTGYKAVDAMIPIGRGQRELIIGDRQTGKTAMAIDAIINQKDSGIKCVYVAIGQKASTIANVVRKLEEHGALANTIVVVATASEAAALQFLAPYSGCSMGEYFRDRGEDALIVYDDLSKQAVAYRQISLLLKRPPGREAYPGDVFYLHSRLLERASRVNEIYVEKFTKGAVTGKTGSLTALPIIETQAGDVSAFVPTNVISITDGQIFLETDLFNSGLRPAVNPGISVSRVGGAAQTKIIKKLSGGIRTALAQYRELAAFSQFASDLDDATRAQLEHGVRVTELMKQKQYAPMSVAAQSVSIFAAEKGYLKSVELKKVGDFEAALLSFMNSEHAALMKLINETGDYNAEIEAELKAGLDKFVATQTW.

Gly169 to Thr176 is an ATP binding site.

It belongs to the ATPase alpha/beta chains family. F-type ATPases have 2 components, CF(1) - the catalytic core - and CF(0) - the membrane proton channel. CF(1) has five subunits: alpha(3), beta(3), gamma(1), delta(1), epsilon(1). CF(0) has three main subunits: a(1), b(2) and c(9-12). The alpha and beta chains form an alternating ring which encloses part of the gamma chain. CF(1) is attached to CF(0) by a central stalk formed by the gamma and epsilon chains, while a peripheral stalk is formed by the delta and b chains.

The protein resides in the cell inner membrane. It catalyses the reaction ATP + H2O + 4 H(+)(in) = ADP + phosphate + 5 H(+)(out). Functionally, produces ATP from ADP in the presence of a proton gradient across the membrane. The alpha chain is a regulatory subunit. This is ATP synthase subunit alpha from Shewanella putrefaciens (strain CN-32 / ATCC BAA-453).